Reading from the N-terminus, the 734-residue chain is Methionine--tRNA ligase (734 aa).

A 'HIGH' region motif is present at residues 12-22 (PYVNNIPHLGN). C143, C146, C155, and C158 together coordinate Zn(2+). Residues 330–334 (KFSKS) carry the 'KMSKS' region motif. Position 333 (K333) interacts with ATP. Residues 570 to 675 (FREKVLLRVV…QNPIAGERII (106 aa)) form the tRNA-binding domain.

It belongs to the class-I aminoacyl-tRNA synthetase family. MetG type 1 subfamily. As to quaternary structure, homodimer. Requires Zn(2+) as cofactor.

It is found in the cytoplasm. It carries out the reaction tRNA(Met) + L-methionine + ATP = L-methionyl-tRNA(Met) + AMP + diphosphate. Its function is as follows. Is required not only for elongation of protein synthesis but also for the initiation of all mRNA translation through initiator tRNA(fMet) aminoacylation. This chain is Methionine--tRNA ligase, found in Borreliella burgdorferi (strain ZS7) (Borrelia burgdorferi).